Consider the following 366-residue polypeptide: Cyanide hydratase (366 aa).

The region spanning 6–285 (YKAAAVTSEP…DGLMFVDIDL (280 aa)) is the CN hydrolase domain. Glu46 serves as the catalytic Proton acceptor. The active site involves Lys128. Residue Cys163 is the Nucleophile of the active site.

This sequence belongs to the carbon-nitrogen hydrolase superfamily. Nitrilase family. Oligomer of dimers, forming left-handed helical fibers.

The enzyme catalyses formamide = hydrogen cyanide + H2O. In terms of biological role, catalyzes the hydration of cyanide to formamide. Degradation of cyanide may be important for plant pathogenic fungi in infection of cyanogenic plants. Can also transform some nitriles like 2-cyanopyridine and fumaronitrile. The protein is Cyanide hydratase of Pyrenophora teres f. teres (strain 0-1) (Barley net blotch fungus).